The following is a 299-amino-acid chain: Glycine--tRNA ligase alpha subunit (299 aa).

This sequence belongs to the class-II aminoacyl-tRNA synthetase family. As to quaternary structure, tetramer of two alpha and two beta subunits.

The protein resides in the cytoplasm. The enzyme catalyses tRNA(Gly) + glycine + ATP = glycyl-tRNA(Gly) + AMP + diphosphate. The sequence is that of Glycine--tRNA ligase alpha subunit from Desulforapulum autotrophicum (strain ATCC 43914 / DSM 3382 / VKM B-1955 / HRM2) (Desulfobacterium autotrophicum).